The primary structure comprises 413 residues: Floricaula/leafy homolog 1 (413 aa).

Disordered stretches follow at residues 154–177 (EGLSEEPVQQQEREAVGSGGGGTT) and 191–239 (QRRR…RQRE). Residues 201 to 210 (GRERRGRASA) show a composition bias toward basic and acidic residues. Acidic residues predominate over residues 211-225 (EEDEETEEGQEDEWN). 3 consecutive DNA-binding regions follow at residues 238-242 (REHPF), 307-314 (NKPKMRHY), and 378-381 (YVPT).

It belongs to the FLO/LFY family. As to expression, expressed in floral meristems and in indeterminate vegetative meristems.

It localises to the nucleus. In terms of biological role, probable transcription factor that act to specify determinacy in the progenitor cells for both flowers and leaves. This chain is Floricaula/leafy homolog 1 (FL1), found in Nicotiana tabacum (Common tobacco).